The sequence spans 573 residues: Arylsulfatase I (573 aa).

A signal peptide spans 1-23 (MHALSGFSLVSLLSLGYLSWDWA). Ca(2+) contacts are provided by Asp-55, Asp-56, and Cys-93. Cys-93 (nucleophile) is an active-site residue. 3-oxoalanine (Cys) is present on Cys-93. Lys-147 is a binding site for substrate. The active site involves His-149. His-239 is a binding site for substrate. Residues Asn-276 and Asn-288 are each glycosylated (N-linked (GlcNAc...) asparagine). Asp-297 and Asn-298 together coordinate Ca(2+). Lys-315 is a substrate binding site. 2 N-linked (GlcNAc...) asparagine glycosylation sites follow: Asn-466 and Asn-496. Residues 506-550 (AANPRAHPDFNGGAWGPWASDEDEEEEDEEEEGRARSFPRGRRKK) form a disordered region. Residues 525–537 (SDEDEEEEDEEEE) show a composition bias toward acidic residues.

Belongs to the sulfatase family. Requires Ca(2+) as cofactor. In terms of processing, the oxidation of Cys-93 residue to 3-oxoalanine (also known as C(alpha)-formylglycine) by SUMF1/Sulfatase-modifying factor 1, seems critical for catalytic activity.

It is found in the secreted. The protein localises to the endoplasmic reticulum. Its function is as follows. Displays arylsulfatase activity at neutral pH, when co-expressed with SUMF1; arylsulfatase activity is measured in the secretion medium of retinal cell line, but no activity is recorded when measured in cell extracts. In Rattus norvegicus (Rat), this protein is Arylsulfatase I (Arsi).